Consider the following 988-residue polypeptide: Centrosomal protein of 120 kDa (988 aa).

Residues 1–112 form the C2 1 domain; that stretch reads MVPKSDQLLI…QETKQAPKWY (112 aa). The interval 354–425 is disordered; the sequence is QNGHEAEHSQ…KPTVKGIGSV (72 aa). A compositionally biased stretch (pro residues) spans 384–394; sequence SPAPPPPPNQT. Residues 435 to 569 form the C2 2 domain; it reads TCGASEVVTS…LSSEKTRFLG (135 aa). Residues 624-644 form a disordered region; that stretch reads GVPAVDQKPSSPPPAPCPSEI. Positions 706–929 form a coiled coil; sequence AEYSILEGKL…QYQDCKEIAS (224 aa). Residues Ser934 and Ser938 each carry the phosphoserine modification.

It belongs to the CEP120 family. As to quaternary structure, interacts with TACC2, TACC3, CCDC52, TALPID3. In terms of tissue distribution, ubiquitous. Highly expressed in brain, lung and kidney and weakly expressed in heart, liver, small intestine and limb (at protein level). Expressed in brain.

It is found in the cytoplasm. It localises to the cytoskeleton. Its subcellular location is the microtubule organizing center. The protein resides in the centrosome. Functionally, plays a role in the microtubule-dependent coupling of the nucleus and the centrosome. Involved in the processes that regulate centrosome-mediated interkinetic nuclear migration (INM) of neural progenitors and for proper positioning of neurons during brain development. Also implicated in the migration and selfrenewal of neural progenitors. Required for centriole duplication and maturation during mitosis and subsequent ciliogenesis. Required for the recruitment of CEP295 to the proximal end of new-born centrioles at the centriolar microtubule wall during early S phase in a PLK4-dependent manner. The sequence is that of Centrosomal protein of 120 kDa (Cep120) from Mus musculus (Mouse).